The chain runs to 261 residues: Indole-3-glycerol phosphate synthase (261 aa).

Belongs to the TrpC family.

It catalyses the reaction 1-(2-carboxyphenylamino)-1-deoxy-D-ribulose 5-phosphate + H(+) = (1S,2R)-1-C-(indol-3-yl)glycerol 3-phosphate + CO2 + H2O. It functions in the pathway amino-acid biosynthesis; L-tryptophan biosynthesis; L-tryptophan from chorismate: step 4/5. The chain is Indole-3-glycerol phosphate synthase from Burkholderia mallei (strain NCTC 10247).